We begin with the raw amino-acid sequence, 96 residues long: Conantokin-E (96 aa).

Residues L1–T24 form the signal peptide. Residues E25 to R72 constitute a propeptide that is removed on maturation. Positions S28–L57 are disordered. Residues S44 to L57 show a composition bias toward basic and acidic residues. 4-carboxyglutamate occurs at positions 75, 76, 82, 86, and 95. Positions 82 and 86 each coordinate a divalent metal cation. A disulfide bond links C83 and C96.

This sequence belongs to the conotoxin B superfamily. Expressed by the venom duct.

The protein localises to the secreted. In terms of biological role, conantokins inhibit N-methyl-D-aspartate (NMDA) receptors. This toxin has the highest potency for the NR2B/GRIN2B subunit, followed by NR2A/GRIN2A, NR2C/GRIN2C, and NR2D/GRIN2D subunits. The sequence is that of Conantokin-E from Conus ermineus (Agate cone).